The chain runs to 172 residues: Small t antigen (172 aa).

Residue M1 is modified to N-acetylmethionine; by host. In terms of domain architecture, J spans 12–75 (ELMDLLGLER…VKVAHQPDFG (64 aa)). The C4-type; atypical zinc finger occupies 101 to 114 (CSKKPSVHCPCMLC). The segment at 120 to 141 (HLNRKFLRKEPLVWIDCYCIDC) adopts an H1C3-type; atypical zinc-finger fold.

Interacts with host PPP2R1A; the interaction inhibits PP2A activity.

Its subcellular location is the host cytoplasm. It localises to the host nucleus. Promotes efficient viral genome replication by accelerating both G1 and S phase progression of the cell cycle. Inhibits host PP2A by binding to the A subunit, thereby displacing lower affinity regulatory B subunit. Inactivation of PP2A in turn results in the transactivation of cyclin A and cyclin D1 promoters. Late during the infection cycle, ST may induce dephosphorylation of host MTOR, leading to the inhibition of cap-dependent translation. May establish and maintain high levels of viral genomes during persistent infection in cell culture. This is Small t antigen from Homo sapiens (Human).